A 467-amino-acid polypeptide reads, in one-letter code: Membrane-bound acylglycerophosphatidylinositol O-acyltransferase mboat7 (467 aa).

The Cytoplasmic portion of the chain corresponds to 1–5 (MSPDE). A helical transmembrane segment spans residues 6-22 (LVYLGILAATIPVGFLF). Over 23-33 (RYLSPPVKQGA) the chain is Lumenal. The chain crosses the membrane as a helical span at residues 34-57 (ALLLGLIISIATCGIHTLHSLCTV). Topologically, residues 58–73 (LGTWIIIKINWRSAPA) are cytoplasmic. Residues 74 to 93 (LSLAWTFLYLLFFRLVTWFG) traverse the membrane as a helical segment. At 94 to 193 (LPQPTPFANA…LPGKEPCLQR (100 aa)) the chain is on the lumenal side. The chain crosses the membrane as a helical span at residues 194–211 (LKMVPVYGLLFIAVNSVF). Residues 212–230 (PLSYVRTEDFLEHNYFYRF) are Cytoplasmic-facing. Residues 231–260 (FYMVAIFFVFRMRFYSAWCGAEAGCISAGL) form a helical membrane-spanning segment. Residues 261 to 421 (GCYPQGALSK…LKASDTISYW (161 aa)) lie on the Lumenal side of the membrane. The N-linked (GlcNAc...) asparagine glycan is linked to asparagine 316. A helical transmembrane segment spans residues 422-442 (SSIYFVIHIIAIVCIAVGQFM). Residues 443–467 (KGGRKREKRERGEGEKEDAVREKAE) lie on the Cytoplasmic side of the membrane. The segment at 447-467 (KREKRERGEGEKEDAVREKAE) is disordered. Residues 451 to 467 (RERGEGEKEDAVREKAE) are compositionally biased toward basic and acidic residues.

This sequence belongs to the membrane-bound acyltransferase family.

The protein localises to the endoplasmic reticulum membrane. The catalysed reaction is a 1-acyl-sn-glycero-3-phospho-(1D-myo-inositol) + (5Z,8Z,11Z,14Z)-eicosatetraenoyl-CoA = a 1-acyl-2-(5Z,8Z,11Z,14Z-eicosatetraenoyl)-sn-glycero-3-phospho-(1D-myo-inositol) + CoA. It catalyses the reaction (5Z,8Z,11Z,14Z)-eicosatetraenoyl-CoA + 1-hexadecanoyl-sn-glycero-3-phosphocholine = 1-hexadecanoyl-2-(5Z,8Z,11Z,14Z-eicosatetraenoyl)-sn-glycero-3-phosphocholine + CoA. It carries out the reaction a 1-acyl-sn-glycero-3-phospho-(1D-myo-inositol) + an acyl-CoA = a 1,2-diacyl-sn-glycero-3-phospho-(1D-myo-inositol) + CoA. The enzyme catalyses 1-octadecanoyl-sn-glycero-3-phospho-(1D-myo-inositol) + (5Z,8Z,11Z,14Z)-eicosatetraenoyl-CoA = 1-octadecanoyl-2-(5Z,8Z,11Z,14Z-eicosatetraenoyl)-sn-glycero-3-phospho-(1D-myo-inositol) + CoA. It participates in lipid metabolism; phospholipid metabolism. In terms of biological role, acyltransferase which catalyzes the transfer of an acyl group from an acyl-CoA to a lysophosphatidylinositol (1-acylglycerophosphatidylinositol or LPI) leading to the production of a phosphatidylinositol (1,2-diacyl-sn-glycero-3-phosphoinositol or PI) and participates in the reacylation step of the phospholipid remodeling pathway also known as the Lands cycle. Prefers arachidonoyl-CoA as the acyl donor, thus contributing to the regulation of free levels arachidonic acid in cell. This Danio rerio (Zebrafish) protein is Membrane-bound acylglycerophosphatidylinositol O-acyltransferase mboat7 (mboat7).